The following is a 641-amino-acid chain: Phosphomethylpyrimidine synthase (641 aa).

Positions 1–12 (MTDTSTQNTATP) are enriched in polar residues. The disordered stretch occupies residues 1-25 (MTDTSTQNTATPTDEYGAEIHPKHS). Substrate contacts are provided by residues asparagine 200, methionine 229, tyrosine 258, histidine 294, 314–316 (SRG), 355–358 (DGLR), and glutamate 394. Position 398 (histidine 398) interacts with Zn(2+). Tyrosine 421 contributes to the substrate binding site. Position 462 (histidine 462) interacts with Zn(2+). Cysteine 542, cysteine 545, and cysteine 550 together coordinate [4Fe-4S] cluster.

The protein belongs to the ThiC family. [4Fe-4S] cluster serves as cofactor.

The catalysed reaction is 5-amino-1-(5-phospho-beta-D-ribosyl)imidazole + S-adenosyl-L-methionine = 4-amino-2-methyl-5-(phosphooxymethyl)pyrimidine + CO + 5'-deoxyadenosine + formate + L-methionine + 3 H(+). Its pathway is cofactor biosynthesis; thiamine diphosphate biosynthesis. Its function is as follows. Catalyzes the synthesis of the hydroxymethylpyrimidine phosphate (HMP-P) moiety of thiamine from aminoimidazole ribotide (AIR) in a radical S-adenosyl-L-methionine (SAM)-dependent reaction. The sequence is that of Phosphomethylpyrimidine synthase from Corynebacterium jeikeium (strain K411).